A 429-amino-acid polypeptide reads, in one-letter code: Glutamate-1-semialdehyde 2,1-aminomutase (429 aa).

Lys-265 is modified (N6-(pyridoxal phosphate)lysine).

It belongs to the class-III pyridoxal-phosphate-dependent aminotransferase family. HemL subfamily. In terms of assembly, homodimer. It depends on pyridoxal 5'-phosphate as a cofactor.

It is found in the cytoplasm. The enzyme catalyses (S)-4-amino-5-oxopentanoate = 5-aminolevulinate. It functions in the pathway porphyrin-containing compound metabolism; protoporphyrin-IX biosynthesis; 5-aminolevulinate from L-glutamyl-tRNA(Glu): step 2/2. This is Glutamate-1-semialdehyde 2,1-aminomutase from Alkalilimnicola ehrlichii (strain ATCC BAA-1101 / DSM 17681 / MLHE-1).